A 193-amino-acid chain; its full sequence is Ribonuclease HII (193 aa).

Residues serine 3–alanine 192 enclose the RNase H type-2 domain. A divalent metal cation contacts are provided by aspartate 9, glutamate 10, and aspartate 101.

The protein belongs to the RNase HII family. The cofactor is Mn(2+). Requires Mg(2+) as cofactor.

It localises to the cytoplasm. The enzyme catalyses Endonucleolytic cleavage to 5'-phosphomonoester.. Endonuclease that specifically degrades the RNA of RNA-DNA hybrids. The protein is Ribonuclease HII of Methylococcus capsulatus (strain ATCC 33009 / NCIMB 11132 / Bath).